Reading from the N-terminus, the 1272-residue chain is Presporeless protein A (1272 aa).

Residues 146-161 carry the Nuclear localization signal motif; that stretch reads KDKRIKPIDPKKKISR. Disordered stretches follow at residues 369-403 and 468-490; these read ASTI…DDTS and STSS…NQLK. Acidic residues predominate over residues 374 to 392; sequence DGEEEDDDDDDNDVDGNDD. Over residues 393–403 the composition is skewed to basic and acidic residues; the sequence is DNNKEKVDDTS. The segment covering 468–487 has biased composition (low complexity); sequence STSSTNTASSTRSKASSNSN.

It localises to the nucleus. Functions autonomously, very early in the prespore pathway, to control prespore cell differentiation, maybe at the level of transcription. Also required for proper aggregation. This is Presporeless protein A (pslA) from Dictyostelium discoideum (Social amoeba).